The primary structure comprises 270 residues: Esterase (270 aa).

Catalysis depends on charge relay system residues serine 127, aspartate 216, and histidine 244.

This sequence belongs to the LovG family.

It functions in the pathway mycotoxin biosynthesis. Functionally, esterase; part of the gene cluster that mediates the biosynthesis of the selective antifungal agent ascochitine, an o-quinone methide that plays a possible protective role against other microbial competitors in nature and is considered to be important for pathogenicity of legume-associated Didymella species. The pathway probably begins with the synthesis of a keto-aldehyde intermediate by the ascochitine non-reducing polyketide synthase pksAC from successive condensations of 4 malonyl-CoA units, presumably with a simple acetyl-CoA starter unit. Release of the keto-aldehyde intermediate is consistent with the presence of the C-terminal reductive release domain. The HR-PKS (orf7) probably makes a diketide starter unit which is passed to the non-reducing polyketide synthase pksAC for further extension, producing ascochital and ascochitine. The aldehyde dehydrogenase (orf1), the 2-oxoglutarate-dependent dioxygenase (orf3) and the dehydrogenase (orf9) are probably involved in subsequent oxidations of methyl groups to the carboxylic acid of the heterocyclic ring. The ascochitine gene cluster also includes a gene encoding a short peptide with a cupin domain (orf2) that is often found in secondary metabolite gene clusters and which function has still to be determined. The polypeptide is Esterase (Didymella fabae (Leaf and pod spot disease fungus)).